Consider the following 511-residue polypeptide: Sodium/proline symporter (511 aa).

Transmembrane regions (helical) follow at residues W16–Y36, I53–M73, L84–V104, I138–S158, F173–A193, F199–N219, L239–F259, I285–F305, V326–S346, F380–W400, L409–L429, A437–I457, and I466–V486.

It belongs to the sodium:solute symporter (SSF) (TC 2.A.21) family.

It localises to the cell membrane. The enzyme catalyses L-proline(in) + Na(+)(in) = L-proline(out) + Na(+)(out). Functionally, catalyzes the sodium-dependent uptake of extracellular L-proline. Since most S.aureus strains are L-proline auxotrophs, this transporter may aid the bacterial persistence during an infection of tissues with low proline concentrations. The chain is Sodium/proline symporter from Staphylococcus aureus.